The primary structure comprises 650 residues: DNA gyrase subunit B (650 aa).

The Toprim domain occupies 429–543; it reads NELFIVEGDS…AGYVYIAQPP (115 aa). Mg(2+)-binding residues include glutamate 435, aspartate 508, and aspartate 510.

It belongs to the type II topoisomerase GyrB family. In terms of assembly, heterotetramer, composed of two GyrA and two GyrB chains. In the heterotetramer, GyrA contains the active site tyrosine that forms a transient covalent intermediate with DNA, while GyrB binds cofactors and catalyzes ATP hydrolysis. Mg(2+) serves as cofactor. Requires Mn(2+) as cofactor. Ca(2+) is required as a cofactor.

It localises to the cytoplasm. It carries out the reaction ATP-dependent breakage, passage and rejoining of double-stranded DNA.. Its function is as follows. A type II topoisomerase that negatively supercoils closed circular double-stranded (ds) DNA in an ATP-dependent manner to modulate DNA topology and maintain chromosomes in an underwound state. Negative supercoiling favors strand separation, and DNA replication, transcription, recombination and repair, all of which involve strand separation. Also able to catalyze the interconversion of other topological isomers of dsDNA rings, including catenanes and knotted rings. Type II topoisomerases break and join 2 DNA strands simultaneously in an ATP-dependent manner. The protein is DNA gyrase subunit B of Streptococcus pyogenes serotype M18 (strain MGAS8232).